Consider the following 242-residue polypeptide: Venom nerve growth factor 2 (242 aa).

Positions 1 to 18 (MSMLCYTLIIAFLIGIWA) are cleaved as a signal peptide. A propeptide spanning residues 19–125 (APQSEDNVPL…ALNRNIQAKR (107 aa)) is cleaved from the precursor. Positions 47 to 66 (DLKTSRNTDQRHPAPKKADD) are enriched in basic and acidic residues. The interval 47 to 70 (DLKTSRNTDQRHPAPKKADDQELG) is disordered. 3 disulfides stabilise this stretch: Cys139–Cys203, Cys181–Cys231, and Cys191–Cys233.

This sequence belongs to the NGF-beta family. In terms of assembly, homodimer; non-covalently linked. As to expression, expressed by the venom gland.

The protein localises to the secreted. Nerve growth factor is important for the development and maintenance of the sympathetic and sensory nervous systems. It stimulates division and differentiation of sympathetic and embryonic sensory neurons as well as basal forebrain cholinergic neurons in the brain. Its relevance in the snake venom is not clear. However, it has been shown to inhibit metalloproteinase-dependent proteolysis of platelet glycoprotein Ib alpha, suggesting a metalloproteinase inhibition to prevent metalloprotease autodigestion and/or protection against prey proteases. Binds a lipid between the two protein chains in the homodimer. The lipid-bound form promotes histamine relase from mouse mast cells, contrary to the lipid-free form. This chain is Venom nerve growth factor 2, found in Pseudechis australis (Mulga snake).